A 386-amino-acid chain; its full sequence is Histidinol-phosphate aminotransferase (386 aa).

At Lys-240 the chain carries N6-(pyridoxal phosphate)lysine.

It belongs to the class-II pyridoxal-phosphate-dependent aminotransferase family. Histidinol-phosphate aminotransferase subfamily. As to quaternary structure, homodimer. It depends on pyridoxal 5'-phosphate as a cofactor.

It carries out the reaction L-histidinol phosphate + 2-oxoglutarate = 3-(imidazol-4-yl)-2-oxopropyl phosphate + L-glutamate. It functions in the pathway amino-acid biosynthesis; L-histidine biosynthesis; L-histidine from 5-phospho-alpha-D-ribose 1-diphosphate: step 7/9. The protein is Histidinol-phosphate aminotransferase of Bifidobacterium longum (strain NCC 2705).